The chain runs to 623 residues: E3 ubiquitin-protein ligase ORTHRUS 5 (623 aa).

A PHD-type zinc finger spans residues 12–62 (DGVCMRCQVNPPSEETLTCGTCVTPWHVSCLLPESLASSTGDWECPDCSGV). The RING-type 1 zinc-finger motif lies at 129 to 169 (CSICIQLPERPVTTPCGHNFCLKCFEKWAVGQGKLTCMICR). Residues 258 to 407 (TRNQGVLVGE…HKMCRYLFVR (150 aa)) form the YDG domain. The RING-type 2 zinc finger occupies 498–555 (CQICRKVLSLPVTTPCAHNFCKACLEAKFAGITQLRDRSNGVRKLRAKKNIMTCPCCT). The segment at 580–623 (KSEEEAEVAESSNISEEEGEEESEPPTKKIKMDKNSVGGTSLSA) is disordered. Acidic residues predominate over residues 594-603 (SEEEGEEESE). The segment covering 604–613 (PPTKKIKMDK) has biased composition (basic and acidic residues).

Expressed in inflorescences.

It is found in the nucleus. It catalyses the reaction S-ubiquitinyl-[E2 ubiquitin-conjugating enzyme]-L-cysteine + [acceptor protein]-L-lysine = [E2 ubiquitin-conjugating enzyme]-L-cysteine + N(6)-ubiquitinyl-[acceptor protein]-L-lysine.. It participates in protein modification; protein ubiquitination. In terms of biological role, E3 ubiquitin-protein ligase. Participates in CpG methylation-dependent transcriptional regulation and epigenetic transcriptional silencing. Mediates ubiquitination with the E2 ubiquitin-conjugating enzyme UBC11. The polypeptide is E3 ubiquitin-protein ligase ORTHRUS 5 (ORTH5) (Arabidopsis thaliana (Mouse-ear cress)).